A 754-amino-acid polypeptide reads, in one-letter code: Carbon catabolite repressor protein 4 homolog 6 (754 aa).

2 disordered regions span residues Pro-34–Val-65 and Glu-85–Pro-176. Basic and acidic residues predominate over residues Phe-50–Arg-61. 2 stretches are compositionally biased toward polar residues: residues Gln-96–Tyr-106 and Gly-116–Tyr-133. Residues Lys-162 to Tyr-171 show a composition bias toward basic and acidic residues. Glu-237 is a Mg(2+) binding site. 2 disordered regions span residues Val-404 to Val-431 and Ile-494 to Ile-558. Polar residues-rich tracts occupy residues Asn-415–Val-431, Gly-503–Ser-525, and Asp-534–Glu-545.

This sequence belongs to the CCR4/nocturin family. As to quaternary structure, component of the CCR4-NOT complex, at least composed of CRR4 and CAF1 proteins. It depends on Mg(2+) as a cofactor.

Its subcellular location is the nucleus. The protein resides in the cytoplasm. It carries out the reaction Exonucleolytic cleavage of poly(A) to 5'-AMP.. Acts as a catalytic component of the CCR4-NOT core complex, which in the nucleus seems to be a general transcription factor, and in the cytoplasm the major mRNA deadenylase involved in mRNA turnover. In Arabidopsis thaliana (Mouse-ear cress), this protein is Carbon catabolite repressor protein 4 homolog 6 (CCR4-6).